Consider the following 495-residue polypeptide: Catalase B (495 aa).

A disordered region spans residues 1 to 25; it reads MSNNKKLTSLFGAPVSDRENSMTAG. Catalysis depends on residues His-55 and Asn-128. Tyr-338 contacts heme.

The protein belongs to the catalase family. Homodimer. Heme is required as a cofactor.

It carries out the reaction 2 H2O2 = O2 + 2 H2O. Its function is as follows. Decomposes hydrogen peroxide into water and oxygen; serves to protect cells from the toxic effects of hydrogen peroxide. This Staphylococcus xylosus protein is Catalase B (katB).